We begin with the raw amino-acid sequence, 358 residues long: Photosystem II protein D1 (358 aa).

3 helical membrane passes run 29–46 (YVGWFGVLMIPTLLAATI), 116–131 (HFLIGIFCWLGRQWEL), and 140–154 (WICVAYSAPVAAATS). His-116 lines the chlorophyll a pocket. Trp-124 serves as a coordination point for pheophytin a. Asp-168 and Glu-187 together coordinate [CaMn4O5] cluster. Residues 195-216 (FHQLGVAGVFGGSLFCAMHGSL) traverse the membrane as a helical segment. His-196 is a chlorophyll a binding site. Residues His-213 and 262–263 (SF) each bind a quinone. His-213 is a Fe cation binding site. His-270 contacts Fe cation. A helical transmembrane segment spans residues 272–286 (FLAAWPVVCIWFTAL). [CaMn4O5] cluster is bound by residues His-330, Glu-331, Asp-340, and Ala-342. The propeptide occupies 343-358 (AGEVLPIALQSPAING).

The protein belongs to the reaction center PufL/M/PsbA/D family. PSII is composed of 1 copy each of membrane proteins PsbA, PsbB, PsbC, PsbD, PsbE, PsbF, PsbH, PsbI, PsbJ, PsbK, PsbL, PsbM, PsbT, PsbX, PsbY, PsbZ, Psb30/Ycf12, peripheral proteins PsbO, CyanoQ (PsbQ), PsbU, PsbV and a large number of cofactors. It forms dimeric complexes. The D1/D2 heterodimer binds P680, chlorophylls that are the primary electron donor of PSII, and subsequent electron acceptors. It shares a non-heme iron and each subunit binds pheophytin, quinone, additional chlorophylls, carotenoids and lipids. D1 provides most of the ligands for the Mn4-Ca-O5 cluster of the oxygen-evolving complex (OEC). There is also a Cl(-1) ion associated with D1 and D2, which is required for oxygen evolution. The PSII complex binds additional chlorophylls, carotenoids and specific lipids. serves as cofactor. Tyr-159 forms a radical intermediate that is referred to as redox-active TyrZ, YZ or Y-Z. In terms of processing, C-terminally processed by CtpA; processing is essential to allow assembly of the oxygen-evolving complex and thus photosynthetic growth.

It localises to the cellular thylakoid membrane. The catalysed reaction is 2 a plastoquinone + 4 hnu + 2 H2O = 2 a plastoquinol + O2. In terms of biological role, photosystem II (PSII) is a light-driven water:plastoquinone oxidoreductase that uses light energy to abstract electrons from H(2)O, generating O(2) and a proton gradient subsequently used for ATP formation. It consists of a core antenna complex that captures photons, and an electron transfer chain that converts photonic excitation into a charge separation. The D1/D2 (PsbA/PsbD) reaction center heterodimer binds P680, the primary electron donor of PSII as well as several subsequent electron acceptors. The protein is Photosystem II protein D1 of Mastigocladus laminosus (Fischerella sp.).